We begin with the raw amino-acid sequence, 270 residues long: Protein-ADP-ribose hydrolase (270 aa).

A Macro domain is found at 73 to 267 (VSVKDCQKTN…LYDTYLQKEN (195 aa)). Residues aspartate 92, isoleucine 93, and asparagine 106 each contribute to the ADP-D-ribose site. Residues cysteine 112, histidine 117, and cysteine 119 each coordinate Zn(2+). 8 residues coordinate ADP-D-ribose: cysteine 119, isoleucine 120, aspartate 121, serine 212, threonine 213, glycine 214, glutamate 215, and phenylalanine 216.

This sequence belongs to the MacroD-type family. Zn-Macro subfamily. It depends on Zn(2+) as a cofactor.

The enzyme catalyses 4-O-(ADP-D-ribosyl)-L-aspartyl-[protein] + H2O = L-aspartyl-[protein] + ADP-D-ribose + H(+). ADP-ribosylhydrolase that specifically reverses the SirTM-mediated mono-ADP-ribosylation at an asparatate residue of GcvH-L, by releasing ADP-ribose from the target protein. May play a role in the regulation of the response to host-induced oxidative stress. The sequence is that of Protein-ADP-ribose hydrolase from Streptococcus pyogenes serotype M6 (strain ATCC BAA-946 / MGAS10394).